A 156-amino-acid chain; its full sequence is Transcriptional repressor NrdR (156 aa).

Residues 3–34 fold into a zinc finger; sequence CPFCQHGHSRVIDSRVIEAGSAIRRRRECSQC. The ATP-cone domain occupies 46–136; the sequence is LLVLKRNGVT…VYKSFESADD (91 aa).

Belongs to the NrdR family. Requires Zn(2+) as cofactor.

In terms of biological role, negatively regulates transcription of bacterial ribonucleotide reductase nrd genes and operons by binding to NrdR-boxes. This is Transcriptional repressor NrdR from Corynebacterium efficiens (strain DSM 44549 / YS-314 / AJ 12310 / JCM 11189 / NBRC 100395).